The sequence spans 267 residues: Undecaprenyl-diphosphatase (267 aa).

7 helical membrane-spanning segments follow: residues 39–59, 87–107, 112–132, 145–165, 183–203, 216–236, and 244–264; these read PGLAFDVALHFGTLLALIWYF, VLYLIAATIPGGIGGLLLNDL, FRSPVVIATSLIVMGILLWAV, VTLRDAIIVGCAQVLALVPGV, PSVARFSFLMSMPITLAAVIV, LPLLAGVAAAAVSSWFAISVL, and SFGVFAVYRVLLGIVVFATLA.

This sequence belongs to the UppP family.

The protein localises to the cell inner membrane. It carries out the reaction di-trans,octa-cis-undecaprenyl diphosphate + H2O = di-trans,octa-cis-undecaprenyl phosphate + phosphate + H(+). Catalyzes the dephosphorylation of undecaprenyl diphosphate (UPP). Confers resistance to bacitracin. The chain is Undecaprenyl-diphosphatase from Gemmatimonas aurantiaca (strain DSM 14586 / JCM 11422 / NBRC 100505 / T-27).